Here is a 388-residue protein sequence, read N- to C-terminus: Succinate--CoA ligase [ADP-forming] subunit beta (388 aa).

Residues 9–236 form the ATP-grasp domain; that stretch reads KKLFAEHGVP…VAAVDPLEQK (228 aa). Residues K45, 52-54, E91, S94, and E99 each bind ATP; that span reads GRG. Mg(2+) is bound by residues N191 and D205. Residues N256 and 318-320 contribute to the substrate site; that span reads GIT.

This sequence belongs to the succinate/malate CoA ligase beta subunit family. In terms of assembly, heterotetramer of two alpha and two beta subunits. Mg(2+) is required as a cofactor.

It carries out the reaction succinate + ATP + CoA = succinyl-CoA + ADP + phosphate. It catalyses the reaction GTP + succinate + CoA = succinyl-CoA + GDP + phosphate. Its pathway is carbohydrate metabolism; tricarboxylic acid cycle; succinate from succinyl-CoA (ligase route): step 1/1. Succinyl-CoA synthetase functions in the citric acid cycle (TCA), coupling the hydrolysis of succinyl-CoA to the synthesis of either ATP or GTP and thus represents the only step of substrate-level phosphorylation in the TCA. The beta subunit provides nucleotide specificity of the enzyme and binds the substrate succinate, while the binding sites for coenzyme A and phosphate are found in the alpha subunit. This chain is Succinate--CoA ligase [ADP-forming] subunit beta, found in Parafrankia sp. (strain EAN1pec).